Here is a 458-residue protein sequence, read N- to C-terminus: Argininosuccinate lyase (458 aa).

This sequence belongs to the lyase 1 family. Argininosuccinate lyase subfamily.

It localises to the cytoplasm. The catalysed reaction is 2-(N(omega)-L-arginino)succinate = fumarate + L-arginine. It participates in amino-acid biosynthesis; L-arginine biosynthesis; L-arginine from L-ornithine and carbamoyl phosphate: step 3/3. The chain is Argininosuccinate lyase from Salmonella paratyphi B (strain ATCC BAA-1250 / SPB7).